We begin with the raw amino-acid sequence, 81 residues long: Short neurotoxin 2 (81 aa).

The N-terminal stretch at 1 to 21 (MKTLLLTLVVVTIVCLDLGYT) is a signal peptide. 4 cysteine pairs are disulfide-bonded: C24/C43, C38/C60, C62/C73, and C74/C79.

The protein belongs to the three-finger toxin family. Short-chain subfamily. Type I alpha-neurotoxin sub-subfamily. As to expression, expressed by the venom gland.

It localises to the secreted. Functionally, binds to muscle nicotinic acetylcholine receptor (nAChR) and inhibit acetylcholine from binding to the receptor, thereby impairing neuromuscular transmission. The sequence is that of Short neurotoxin 2 from Hydrophis peronii (Spiny-headed seasnake).